A 214-amino-acid chain; its full sequence is Probable nicotinate-nucleotide adenylyltransferase (214 aa).

This sequence belongs to the NadD family.

The catalysed reaction is nicotinate beta-D-ribonucleotide + ATP + H(+) = deamido-NAD(+) + diphosphate. It participates in cofactor biosynthesis; NAD(+) biosynthesis; deamido-NAD(+) from nicotinate D-ribonucleotide: step 1/1. Functionally, catalyzes the reversible adenylation of nicotinate mononucleotide (NaMN) to nicotinic acid adenine dinucleotide (NaAD). The chain is Probable nicotinate-nucleotide adenylyltransferase from Thermomicrobium roseum (strain ATCC 27502 / DSM 5159 / P-2).